The following is a 377-amino-acid chain: Probable riboflavin import permease protein RfuC (377 aa).

Helical transmembrane passes span 4–24 (VINSCIAVLLGVAVMSAVIVL), 49–69 (ALFHKAGLFVCMALGASCALK), 72–92 (MINLGGDGQIYAAGFVTALLL), 98–118 (VGFLLQWSVALLCALSVAGIL), 135–155 (ITSFLLSTACVPLIDALIITV), 182–202 (FGVPAVLTYASLVALAVGCFF), 223–245 (FVGFPVWATYVWGMVLSGALFGL), 249–268 (FSVVGLFGTCYVGFSVGMGY), 274–294 (ALIAHAHITVLVPLAFFFAWM), and 303–323 (LGAHLTVNVVLFLQAAIFLLI).

Belongs to the binding-protein-dependent transport system permease family. As to quaternary structure, the complex is probably composed of two ATP-binding proteins (RfuB), two transmembrane proteins (RfuC and RfuD) and a solute-binding protein (RfuA).

It is found in the cell inner membrane. In terms of biological role, probably part of the ABC transporter complex RfuABCD involved in riboflavin import. Probably responsible for the translocation of the substrate across the membrane. The chain is Probable riboflavin import permease protein RfuC from Treponema pallidum (strain Nichols).